The primary structure comprises 314 residues: Melanoma-associated antigen 3 (314 aa).

Positions 1–20 are enriched in basic and acidic residues; that stretch reads MPLEQRSQHCKPEEGLEARG. Residues 1 to 99 form a disordered region; that stretch reads MPLEQRSQHC…QEEEGPSTFP (99 aa). The segment covering 21–44 has biased composition (low complexity); the sequence is EALGLVGAQAPATEEQEAASSSST. Over residues 65–87 the composition is skewed to polar residues; the sequence is PQGASSLPTTMNYPLWSQSYEDS. An MAGE domain is found at 109-308; it reads LSRKVAELVH…ISYPPLHEWV (200 aa).

As to quaternary structure, interacts with TRIM28. Post-translationally, ubiquitinated by the DCX(DCAF12) complex specifically recognizes the diglutamate (Glu-Glu) at the C-terminus, leading to its degradation. As to expression, expressed in many tumors of several types, such as melanoma, head and neck squamous cell carcinoma, lung carcinoma and breast carcinoma, but not in normal tissues except for testes and placenta. Never expressed in kidney tumors, Leukemias and lymphomas.

Functionally, activator of ubiquitin ligase activity of RING-type zinc finger-containing E3 ubiquitin-protein ligases that acts as a repressor of autophagy. May enhance ubiquitin ligase activity of TRIM28 and stimulate p53/TP53 ubiquitination by TRIM28. Proposed to act through recruitment and/or stabilization of the Ubl-conjugating enzyme (E2) at the E3:substrate complex. May play a role in embryonal development and tumor transformation or aspects of tumor progression. In vitro promotes cell viability in melanoma cell lines. Antigen recognized on a melanoma by autologous cytolytic T-lymphocytes. This chain is Melanoma-associated antigen 3, found in Homo sapiens (Human).